Reading from the N-terminus, the 159-residue chain is SsrA-binding protein (159 aa).

The interval 131-159 (KGKKLHDKRESEKERDWNRQKSRLLKDNG) is disordered. Positions 137–159 (DKRESEKERDWNRQKSRLLKDNG) are enriched in basic and acidic residues.

The protein belongs to the SmpB family.

The protein localises to the cytoplasm. In terms of biological role, required for rescue of stalled ribosomes mediated by trans-translation. Binds to transfer-messenger RNA (tmRNA), required for stable association of tmRNA with ribosomes. tmRNA and SmpB together mimic tRNA shape, replacing the anticodon stem-loop with SmpB. tmRNA is encoded by the ssrA gene; the 2 termini fold to resemble tRNA(Ala) and it encodes a 'tag peptide', a short internal open reading frame. During trans-translation Ala-aminoacylated tmRNA acts like a tRNA, entering the A-site of stalled ribosomes, displacing the stalled mRNA. The ribosome then switches to translate the ORF on the tmRNA; the nascent peptide is terminated with the 'tag peptide' encoded by the tmRNA and targeted for degradation. The ribosome is freed to recommence translation, which seems to be the essential function of trans-translation. The protein is SsrA-binding protein of Rhizobium leguminosarum bv. trifolii (strain WSM2304).